The primary structure comprises 191 residues: MEKFGLKALVPLLKLEDKELSSTYDHSMTLGADLSSMLYSLGIPRDSQDHRVLDTFQSPWAETSRSEVEPRFFTPESFTNIPGVLQSTVTPPCFNSIQNDQQRVALFQDETLFFLFYKHPGTVIQELTYLELRKRNWRYHKTLKAWLTKDPMMEPIVSADGLSERGSYVFFDPQRWEKCQRDFLLFYNAIM.

Belongs to the CNOT2/3/5 family. Forms a NOT protein complex that comprises NOT1, NOT2, NOT3, NOT4 and NOT5. Subunit of the 1.0 MDa CCR4-NOT core complex that contains CCR4, CAF1, NOT1, NOT2, NOT3, NOT4, NOT5, CAF40 and CAF130. In the complex interacts with NOT1 and NOT5. The core complex probably is part of a less characterized 1.9 MDa CCR4-NOT complex.

The protein localises to the cytoplasm. The protein resides in the nucleus. In terms of biological role, acts as a component of the CCR4-NOT core complex, which in the nucleus seems to be a general transcription factor, and in the cytoplasm the major mRNA deadenylase involved in mRNA turnover. NOT2 is required for the integrity of the complex. The NOT protein subcomplex negatively regulates the basal and activated transcription of many genes. Preferentially affects TC-type TATA element-dependent transcription. Could directly or indirectly inhibit component(s) of the general transcription machinery. This chain is General negative regulator of transcription subunit 2 (CDC36), found in Saccharomyces cerevisiae (strain ATCC 204508 / S288c) (Baker's yeast).